Consider the following 345-residue polypeptide: Dihydroorotase (345 aa).

Zn(2+) is bound by residues H13 and H15. Residues H15–R17 and N41 each bind substrate. 3 residues coordinate Zn(2+): K99, H136, and H174. K99 is modified (N6-carboxylysine). H136 serves as a coordination point for substrate. Residue L219 participates in substrate binding. Zn(2+) is bound at residue D247. D247 is a catalytic residue. 2 residues coordinate substrate: H251 and A263.

Belongs to the metallo-dependent hydrolases superfamily. DHOase family. Class II DHOase subfamily. Homodimer. Zn(2+) serves as cofactor.

It catalyses the reaction (S)-dihydroorotate + H2O = N-carbamoyl-L-aspartate + H(+). It functions in the pathway pyrimidine metabolism; UMP biosynthesis via de novo pathway; (S)-dihydroorotate from bicarbonate: step 3/3. Functionally, catalyzes the reversible cyclization of carbamoyl aspartate to dihydroorotate. The protein is Dihydroorotase of Hahella chejuensis (strain KCTC 2396).